The sequence spans 493 residues: Probable cytosol aminopeptidase (493 aa).

The Mn(2+) site is built by K257 and D262. K269 is a catalytic residue. Mn(2+) is bound by residues D280, D339, and E341. R343 is an active-site residue.

Belongs to the peptidase M17 family. Mn(2+) is required as a cofactor.

Its subcellular location is the cytoplasm. The catalysed reaction is Release of an N-terminal amino acid, Xaa-|-Yaa-, in which Xaa is preferably Leu, but may be other amino acids including Pro although not Arg or Lys, and Yaa may be Pro. Amino acid amides and methyl esters are also readily hydrolyzed, but rates on arylamides are exceedingly low.. It carries out the reaction Release of an N-terminal amino acid, preferentially leucine, but not glutamic or aspartic acids.. In terms of biological role, presumably involved in the processing and regular turnover of intracellular proteins. Catalyzes the removal of unsubstituted N-terminal amino acids from various peptides. The protein is Probable cytosol aminopeptidase (pepA) of Aquifex aeolicus (strain VF5).